Reading from the N-terminus, the 472-residue chain is UDP-N-acetylmuramate--L-alanine ligase (472 aa).

Position 122–128 (122–128) interacts with ATP; that stretch reads GSHGKTT.

This sequence belongs to the MurCDEF family.

It localises to the cytoplasm. It catalyses the reaction UDP-N-acetyl-alpha-D-muramate + L-alanine + ATP = UDP-N-acetyl-alpha-D-muramoyl-L-alanine + ADP + phosphate + H(+). It participates in cell wall biogenesis; peptidoglycan biosynthesis. Functionally, cell wall formation. In Prochlorococcus marinus (strain SARG / CCMP1375 / SS120), this protein is UDP-N-acetylmuramate--L-alanine ligase.